The following is a 56-amino-acid chain: Large ribosomal subunit protein bL33 (56 aa).

It belongs to the bacterial ribosomal protein bL33 family.

This is Large ribosomal subunit protein bL33 (rpmG) from Treponema pallidum (strain Nichols).